A 495-amino-acid chain; its full sequence is MDIRELIDITELSSIATEGPPPPPPPPLLQPHHSALSSSPLPPPLPPKKLLATTNTPPPPPPPLHSNSQMGAPTSSLVLKSPHNLKGQGQTRKANLKPYHWLKLTRAVQGSLWAEAQKSDEAATAPDFDISEIEKLFSAVNLSSNSENNGGKSGRRARPKVEKVQLIELKRAYNCEIMLSKVKIPLPDLMSSVLALDESVIDVDQVDNLIKFCPTKEEAELLKGFIGNKETLGRCEQFFLELLKVPRVETKLRVFSFKIQFHSQVTDLRRGLNTIHSATNEVRGSTKLKRIMQTILSLGNALNHGTARGSAIGFHLDSLLKLTDTRSRNSKMTLMHYLCKVLAEKLPGLLNFPKDMVSLEAATNIQLKYLAEEMQATSKGLEKVVQEFTASETDCQISKHFHMNLKEFLSVAEGEVRSLASLYSTVGGSADALALYFGEDPARVPFEQVVSTLQNFVRIFVRSHEENCKQVEFEKKRAQKEAENEKLKKGVYNEN.

A disordered region spans residues Met-1 to Arg-92. Residues Gly-19–Leu-29 are compositionally biased toward pro residues. The segment covering Gln-30–Ser-39 has biased composition (low complexity). The FH2 domain maps to Lys-86–Lys-486.

The protein belongs to the formin-like family. Class-II subfamily.

The protein is Formin-like protein 17 (FH17) of Arabidopsis thaliana (Mouse-ear cress).